We begin with the raw amino-acid sequence, 445 residues long: tRNA modification GTPase MnmE (445 aa).

Positions 20, 79, and 119 each coordinate (6S)-5-formyl-5,6,7,8-tetrahydrofolate. The 157-residue stretch at 215 to 371 folds into the TrmE-type G domain; it reads GLKLAIIGPP…ILKNIEEIAE (157 aa). Asn-225 is a K(+) binding site. GTP-binding positions include 225–230, 244–250, and 269–272; these read NAGKSS, SNIAGTT, and DTAG. Ser-229 serves as a coordination point for Mg(2+). K(+) is bound by residues Ser-244, Ile-246, and Thr-249. A Mg(2+)-binding site is contributed by Thr-250. Residue Lys-445 coordinates (6S)-5-formyl-5,6,7,8-tetrahydrofolate.

The protein belongs to the TRAFAC class TrmE-Era-EngA-EngB-Septin-like GTPase superfamily. TrmE GTPase family. Homodimer. Heterotetramer of two MnmE and two MnmG subunits. K(+) serves as cofactor.

Its subcellular location is the cytoplasm. Its function is as follows. Exhibits a very high intrinsic GTPase hydrolysis rate. Involved in the addition of a carboxymethylaminomethyl (cmnm) group at the wobble position (U34) of certain tRNAs, forming tRNA-cmnm(5)s(2)U34. This Rickettsia bellii (strain RML369-C) protein is tRNA modification GTPase MnmE.